The sequence spans 155 residues: UPF0251 protein Paes_1249 (155 aa).

It belongs to the UPF0251 family.

This chain is UPF0251 protein Paes_1249, found in Prosthecochloris aestuarii (strain DSM 271 / SK 413).